The primary structure comprises 286 residues: Pantothenate synthetase (286 aa).

Residue 31–38 coordinates ATP; sequence MGALHDGH. Residue histidine 38 is the Proton donor of the active site. Glutamine 62 is a binding site for (R)-pantoate. Beta-alanine is bound at residue glutamine 62. Residue 148–151 participates in ATP binding; the sequence is GKKD. Glutamine 154 is a (R)-pantoate binding site. Residues valine 177 and 185-188 contribute to the ATP site; that span reads KSSR.

Belongs to the pantothenate synthetase family. As to quaternary structure, homodimer.

The protein localises to the cytoplasm. The enzyme catalyses (R)-pantoate + beta-alanine + ATP = (R)-pantothenate + AMP + diphosphate + H(+). Its pathway is cofactor biosynthesis; (R)-pantothenate biosynthesis; (R)-pantothenate from (R)-pantoate and beta-alanine: step 1/1. Catalyzes the condensation of pantoate with beta-alanine in an ATP-dependent reaction via a pantoyl-adenylate intermediate. The sequence is that of Pantothenate synthetase from Staphylococcus carnosus (strain TM300).